Here is a 288-residue protein sequence, read N- to C-terminus: 33 kDa chaperonin (288 aa).

Intrachain disulfides connect Cys235/Cys237 and Cys268/Cys271.

This sequence belongs to the HSP33 family. Under oxidizing conditions two disulfide bonds are formed involving the reactive cysteines. Under reducing conditions zinc is bound to the reactive cysteines and the protein is inactive.

The protein resides in the cytoplasm. In terms of biological role, redox regulated molecular chaperone. Protects both thermally unfolding and oxidatively damaged proteins from irreversible aggregation. Plays an important role in the bacterial defense system toward oxidative stress. This is 33 kDa chaperonin from Streptococcus suis (strain 98HAH33).